We begin with the raw amino-acid sequence, 202 residues long: Outer-membrane lipoprotein carrier protein (202 aa).

Residues 1 to 18 form the signal peptide; that stretch reads MNKLFLILLLIFSHEVFS.

The protein belongs to the LolA family. As to quaternary structure, monomer.

It is found in the periplasm. Functionally, participates in the translocation of lipoproteins from the inner membrane to the outer membrane. Only forms a complex with a lipoprotein if the residue after the N-terminal Cys is not an aspartate (The Asp acts as a targeting signal to indicate that the lipoprotein should stay in the inner membrane). This Legionella pneumophila (strain Paris) protein is Outer-membrane lipoprotein carrier protein.